The following is a 426-amino-acid chain: Glutamate-1-semialdehyde 2,1-aminomutase (426 aa).

At Lys-265 the chain carries N6-(pyridoxal phosphate)lysine.

Belongs to the class-III pyridoxal-phosphate-dependent aminotransferase family. HemL subfamily. Homodimer. Pyridoxal 5'-phosphate serves as cofactor.

Its subcellular location is the cytoplasm. The catalysed reaction is (S)-4-amino-5-oxopentanoate = 5-aminolevulinate. Its pathway is porphyrin-containing compound metabolism; protoporphyrin-IX biosynthesis; 5-aminolevulinate from L-glutamyl-tRNA(Glu): step 2/2. In Salmonella newport (strain SL254), this protein is Glutamate-1-semialdehyde 2,1-aminomutase.